The sequence spans 273 residues: 4-hydroxy-tetrahydrodipicolinate reductase (273 aa).

Residues 12–17 (GAGGRM) and E38 contribute to the NAD(+) site. R39 is an NADP(+) binding site. NAD(+) is bound by residues 102 to 104 (GTT) and 126 to 129 (AANF). The Proton donor/acceptor role is filled by H159. H160 is a binding site for (S)-2,3,4,5-tetrahydrodipicolinate. Residue K163 is the Proton donor of the active site. 169–170 (GT) serves as a coordination point for (S)-2,3,4,5-tetrahydrodipicolinate.

Belongs to the DapB family. Homotetramer.

The protein resides in the cytoplasm. The enzyme catalyses (S)-2,3,4,5-tetrahydrodipicolinate + NAD(+) + H2O = (2S,4S)-4-hydroxy-2,3,4,5-tetrahydrodipicolinate + NADH + H(+). It carries out the reaction (S)-2,3,4,5-tetrahydrodipicolinate + NADP(+) + H2O = (2S,4S)-4-hydroxy-2,3,4,5-tetrahydrodipicolinate + NADPH + H(+). The protein operates within amino-acid biosynthesis; L-lysine biosynthesis via DAP pathway; (S)-tetrahydrodipicolinate from L-aspartate: step 4/4. Functionally, catalyzes the conversion of 4-hydroxy-tetrahydrodipicolinate (HTPA) to tetrahydrodipicolinate. This chain is 4-hydroxy-tetrahydrodipicolinate reductase, found in Salmonella enteritidis PT4 (strain P125109).